The following is a 263-amino-acid chain: Interleukin-33 (263 aa).

Residues 1 to 17 (MKYSTTKIPPAKMNSSA) show a composition bias toward polar residues. The disordered stretch occupies residues 1–28 (MKYSTTKIPPAKMNSSADKALVKSPKLR). The homeodomain-like HTH domain stretch occupies residues 1-65 (MKYSTTKIPP…CYFRKEITKR (65 aa)). An interaction with RELA region spans residues 62-103 (ITKRYSPRTAEKCRKQCLVFTACHQQLNKDFTSDVPMLQKCF).

It belongs to the IL-1 family. Highly divergent. As to quaternary structure, forms a 1:1:1 heterotrimeric complex with its primary high-affinity receptor IL1RL1 and the coreceptor IL1RAP. Interacts with cargo receptor TMED10; the interaction mediates the translocation from the cytoplasm into the ERGIC (endoplasmic reticulum-Golgi intermediate compartment) and thereby secretion. Post-translationally, the full-length protein can be released from cells and is able to signal via the IL1RL1/ST2 receptor. However, proteolytic processing by CELA1, CSTG/cathepsin G and ELANE/neutrophil elastase produces C-terminal peptides that are more active than the unprocessed full-length protein. May also be proteolytically processed by calpains. Proteolytic cleavage mediated by apoptotic caspases including CASP3 and CASP7 results in IL33 inactivation. In vitro proteolytic cleavage by CASP1 was reported but could not be confirmed in vivo suggesting that IL33 is probably not a direct substrate for that caspase. As to expression, expressed in cultured umbilical artery smooth muscle cells after stimulation with IL1A and IL1B, and to a lesser extent with IFNG. Expressed in vasospastic cerebral arteries after subarachnoid hemorrhage.

It is found in the nucleus. The protein resides in the chromosome. It localises to the cytoplasm. The protein localises to the cytoplasmic vesicle. Its subcellular location is the secretory vesicle. It is found in the secreted. In terms of biological role, cytokine that binds to and signals through the IL1RL1/ST2 receptor which in turn activates NF-kappa-B and MAPK signaling pathways in target cells. Involved in the maturation of Th2 cells inducing the secretion of T-helper type 2-associated cytokines. Also involved in activation of mast cells, basophils, eosinophils and natural killer cells. Acts as a chemoattractant for Th2 cells, and may function as an 'alarmin', that amplifies immune responses during tissue injury. Induces rapid UCP2-dependent mitochondrial rewiring that attenuates the generation of reactive oxygen species and preserves the integrity of Krebs cycle required for persistent production of itaconate and subsequent GATA3-dependent differentiation of inflammation-resolving alternatively activated macrophages. Its function is as follows. In quiescent endothelia the uncleaved form is constitutively and abundantly expressed, and acts as a chromatin-associated nuclear factor with transcriptional repressor properties, it may sequester nuclear NF-kappaB/RELA, lowering expression of its targets. This form is rapidely lost upon angiogenic or pro-inflammatory activation. The protein is Interleukin-33 (IL33) of Canis lupus familiaris (Dog).